The following is a 352-amino-acid chain: ATPase GET3 (352 aa).

Residue 26 to 33 (KGGVGKTT) coordinates ATP. D57 is a catalytic residue. ATP is bound by residues E243 and N270. Positions 283 and 286 each coordinate Zn(2+).

This sequence belongs to the arsA ATPase family. As to quaternary structure, homodimer. Component of the Golgi to ER traffic (GET) complex, which is composed of GET1, GET2 and GET3. Within the complex, GET1 and GET2 form a heterotetramer which is stabilized by phosphatidylinositol binding and which binds to the GET3 homodimer. Interacts with the chloride channel protein GEF1.

It localises to the cytoplasm. It is found in the endoplasmic reticulum. The protein resides in the golgi apparatus. Its function is as follows. ATPase required for the post-translational delivery of tail-anchored (TA) proteins to the endoplasmic reticulum. Recognizes and selectively binds the transmembrane domain of TA proteins in the cytosol. This complex then targets to the endoplasmic reticulum by membrane-bound receptors GET1 and GET2, where the tail-anchored protein is released for insertion. This process is regulated by ATP binding and hydrolysis. ATP binding drives the homodimer towards the closed dimer state, facilitating recognition of newly synthesized TA membrane proteins. ATP hydrolysis is required for insertion. Subsequently, the homodimer reverts towards the open dimer state, lowering its affinity for the GET1-GET2 receptor, and returning it to the cytosol to initiate a new round of targeting. Cooperates with the HDEL receptor ERD2 to mediate the ATP-dependent retrieval of resident ER proteins that contain a C-terminal H-D-E-L retention signal from the Golgi to the ER. Involved in low-level resistance to the oxyanions arsenite and arsenate, and in heat tolerance. This chain is ATPase GET3, found in Vanderwaltozyma polyspora (strain ATCC 22028 / DSM 70294 / BCRC 21397 / CBS 2163 / NBRC 10782 / NRRL Y-8283 / UCD 57-17) (Kluyveromyces polysporus).